The chain runs to 183 residues: ADP-ribosylation factor 3 (183 aa).

A lipid anchor (N-myristoyl glycine) is attached at Gly2. GTP is bound by residues 24 to 31 (GLDKAGKT), 67 to 71 (DVGGQ), and 126 to 129 (NKQD).

Belongs to the small GTPase superfamily. Arf family. In terms of assembly, interacts with RUD3.

The protein localises to the golgi apparatus. Its function is as follows. GTP-binding protein involved in protein trafficking; may modulate vesicle budding and uncoating within the Golgi apparatus. This is ADP-ribosylation factor 3 (ARF3) from Saccharomyces cerevisiae (strain ATCC 204508 / S288c) (Baker's yeast).